The following is a 79-amino-acid chain: Conotoxin Vi6.3 (79 aa).

Residues 1–22 (MKLTCVLIITVLFLTASQLITA) form the signal peptide. Residues 23-47 (DYSRDQRQYRAVRLGDEMRNFKGAR) constitute a propeptide that is removed on maturation. Disulfide bonds link cysteine 49-cysteine 62, cysteine 56-cysteine 67, and cysteine 61-cysteine 77. 2 positions are modified to 4-hydroxyproline: proline 60 and proline 63.

This sequence belongs to the conotoxin O1 superfamily. As to expression, expressed by the venom duct.

It is found in the secreted. Its function is as follows. Ion channel inhibitor that inhibits the increase in intracellular calcium upon depolarization in DRG neurons. In vivo, both intraperitoneal and intracranial injections into mice induce hyperactivity. The sequence is that of Conotoxin Vi6.3 from Conus virgo (Virgin cone).